The following is an 880-amino-acid chain: Alanine--tRNA ligase (880 aa).

H571, H575, C673, and H677 together coordinate Zn(2+).

It belongs to the class-II aminoacyl-tRNA synthetase family. Requires Zn(2+) as cofactor.

The protein resides in the cytoplasm. It catalyses the reaction tRNA(Ala) + L-alanine + ATP = L-alanyl-tRNA(Ala) + AMP + diphosphate. Catalyzes the attachment of alanine to tRNA(Ala) in a two-step reaction: alanine is first activated by ATP to form Ala-AMP and then transferred to the acceptor end of tRNA(Ala). Also edits incorrectly charged Ser-tRNA(Ala) and Gly-tRNA(Ala) via its editing domain. The protein is Alanine--tRNA ligase of Oleidesulfovibrio alaskensis (strain ATCC BAA-1058 / DSM 17464 / G20) (Desulfovibrio alaskensis).